Reading from the N-terminus, the 175-residue chain is Large ribosomal subunit protein uL10 (175 aa).

This sequence belongs to the universal ribosomal protein uL10 family. Part of the ribosomal stalk of the 50S ribosomal subunit. The N-terminus interacts with L11 and the large rRNA to form the base of the stalk. The C-terminus forms an elongated spine to which L12 dimers bind in a sequential fashion forming a multimeric L10(L12)X complex.

In terms of biological role, forms part of the ribosomal stalk, playing a central role in the interaction of the ribosome with GTP-bound translation factors. The chain is Large ribosomal subunit protein uL10 from Pelotomaculum thermopropionicum (strain DSM 13744 / JCM 10971 / SI).